We begin with the raw amino-acid sequence, 292 residues long: Acetylglutamate kinase (292 aa).

Residues Gly64–Gly65, Arg86, and Asn190 each bind substrate.

The protein belongs to the acetylglutamate kinase family. ArgB subfamily.

It is found in the cytoplasm. The catalysed reaction is N-acetyl-L-glutamate + ATP = N-acetyl-L-glutamyl 5-phosphate + ADP. Its pathway is amino-acid biosynthesis; L-arginine biosynthesis; N(2)-acetyl-L-ornithine from L-glutamate: step 2/4. In terms of biological role, catalyzes the ATP-dependent phosphorylation of N-acetyl-L-glutamate. The chain is Acetylglutamate kinase from Geobacter sulfurreducens (strain ATCC 51573 / DSM 12127 / PCA).